A 394-amino-acid chain; its full sequence is Deoxyguanosinetriphosphate triphosphohydrolase-like protein (394 aa).

The interval 1-34 is disordered; it reads MSSSPFFVPRAPYAEDPAKSRGRRFPEDESRTRT. Over residues 16–34 the composition is skewed to basic and acidic residues; that stretch reads DPAKSRGRRFPEDESRTRT. The HD domain occupies 70-210; sequence RLTHSLEVAQ…AALADDIAYN (141 aa).

This sequence belongs to the dGTPase family. Type 2 subfamily.

The polypeptide is Deoxyguanosinetriphosphate triphosphohydrolase-like protein (Caulobacter sp. (strain K31)).